The chain runs to 240 residues: Aliphatic sulfonates import ATP-binding protein SsuB 2 (240 aa).

The region spanning 2–218 (VRTRELRRGF…RHSAPEFIHA (217 aa)) is the ABC transporter domain. 34-41 (GRSGSGKS) contacts ATP.

The protein belongs to the ABC transporter superfamily. Aliphatic sulfonates importer (TC 3.A.1.17.2) family. The complex is composed of two ATP-binding proteins (SsuB), two transmembrane proteins (SsuC) and a solute-binding protein (SsuA).

The protein localises to the cell membrane. The enzyme catalyses ATP + H2O + aliphatic sulfonate-[sulfonate-binding protein]Side 1 = ADP + phosphate + aliphatic sulfonateSide 2 + [sulfonate-binding protein]Side 1.. Part of the ABC transporter complex SsuABC involved in aliphatic sulfonates import. Responsible for energy coupling to the transport system. This is Aliphatic sulfonates import ATP-binding protein SsuB 2 from Nocardia farcinica (strain IFM 10152).